A 384-amino-acid polypeptide reads, in one-letter code: MAP kinase-activated protein kinase 3 (384 aa).

N-acetylmethionine is present on methionine 1. The disordered stretch occupies residues 1–22; that stretch reads MDVETAEEQGGPAPPSGVPCGP. Residues 46-306 form the Protein kinase domain; sequence QLSKQVLGLG…ITQFMNHPWI (261 aa). ATP contacts are provided by residues 52 to 60 and lysine 75; that span reads LGLGVNGKV. Aspartate 168 functions as the Proton acceptor in the catalytic mechanism. A Phosphothreonine; by MAPK14 modification is found at threonine 203. Serine 253 carries the post-translational modification Phosphoserine; by MAPK14. Serine 309 carries the phosphoserine; by autocatalysis modification. Residues 309–345 form an autoinhibitory helix region; the sequence is SMVVPQTPLHTARVLQEDRDHWDEVKEEMTSALATMR. The residue at position 315 (threonine 315) is a Phosphothreonine; by MAPK14. The short motif at 337 to 346 is the Nuclear export signal (NES) element; the sequence is MTSALATMRV. The segment at 347 to 371 is p38 MAPK-binding site; the sequence is DYDQVKIKDLKTSNNRLLNKRRKKQ. Short sequence motifs (bipartite nuclear localization signal) lie at residues 352–355 and 366–370; these read KIKD and KRRKK. Positions 359 to 384 are disordered; that stretch reads SNNRLLNKRRKKQAGSSSGSQGCNNQ. Over residues 373 to 384 the composition is skewed to low complexity; that stretch reads GSSSGSQGCNNQ.

It belongs to the protein kinase superfamily. CAMK Ser/Thr protein kinase family. In terms of assembly, heterodimer with p38-alpha/MAPK14. The heterodimer with p38-alpha/MAPK14 forms a stable complex: molecules are positioned 'face to face' so that the ATP-binding sites of both kinases are at the heterodimer interface. Interacts with TCF3 and with polycomb proteins, such as PCH2 and BMI1/PCGF4. Post-translationally, phosphorylated and activated by MAPK1/ERK2 and MAPK3/ERK1. Phosphorylated and activated by MAP kinase p38-alpha/MAPK14 at Thr-203, Ser-253 and Thr-315.

The protein resides in the nucleus. The protein localises to the cytoplasm. It carries out the reaction L-seryl-[protein] + ATP = O-phospho-L-seryl-[protein] + ADP + H(+). It catalyses the reaction L-threonyl-[protein] + ATP = O-phospho-L-threonyl-[protein] + ADP + H(+). Its activity is regulated as follows. Activated following phosphorylation by p38-alpha/MAPK14 following various stresses. Inhibited by ligand 5B (2'-[2-(1,3-benzodioxol-5-yl)pyrimidin-4-yl]-5',6'-dihydrospiro[piperidine-4,7'-pyrrolo[3,2-c]pyridin]- 4'(1'h)-one) and ligand P4O (2-[2-(2-fluorophenyl)pyridin-4-yl]-1,5,6,7-tetrahydro- 4h-pyrrolo[3,2-c]pyridin-4-one), 2 ATP-competitive inhibitors. In terms of biological role, stress-activated serine/threonine-protein kinase involved in cytokines production, endocytosis, cell migration, chromatin remodeling and transcriptional regulation. Following stress, it is phosphorylated and activated by MAP kinase p38-alpha/MAPK14, leading to phosphorylation of substrates. Phosphorylates serine in the peptide sequence, Hyd-X-R-X(2)-S, where Hyd is a large hydrophobic residue. MAPKAPK2 and MAPKAPK3, share the same function and substrate specificity, but MAPKAPK3 kinase activity and level in protein expression are lower compared to MAPKAPK2. Phosphorylates HSP27/HSPB1, KRT18, KRT20, RCSD1, RPS6KA3, TAB3 and TTP/ZFP36. Mediates phosphorylation of HSP27/HSPB1 in response to stress, leading to dissociate HSP27/HSPB1 from large small heat-shock protein (sHsps) oligomers and impair their chaperone activities and ability to protect against oxidative stress effectively. Involved in inflammatory response by regulating tumor necrosis factor (TNF) and IL6 production post-transcriptionally: acts by phosphorylating AU-rich elements (AREs)-binding proteins, such as TTP/ZFP36, leading to regulate the stability and translation of TNF and IL6 mRNAs. Phosphorylation of TTP/ZFP36, a major post-transcriptional regulator of TNF, promotes its binding to 14-3-3 proteins and reduces its ARE mRNA affinity leading to inhibition of dependent degradation of ARE-containing transcript. Involved in toll-like receptor signaling pathway (TLR) in dendritic cells: required for acute TLR-induced macropinocytosis by phosphorylating and activating RPS6KA3. Also acts as a modulator of Polycomb-mediated repression. The polypeptide is MAP kinase-activated protein kinase 3 (MAPKAPK3) (Bos taurus (Bovine)).